A 932-amino-acid polypeptide reads, in one-letter code: MDRFQTKRKTYSYNGYSNNDYGYYNNNCSNVNYNNDIHYKNNNYNNNNNNNNSNSGNNFNNNNNNNNNNNNNNNNNNNNNNNNNNYTYGNNNNNNSNNNNNNINNNGNSNNNNNNSNGSENNYFQSENQSNKDQNSYFNSSYLRNPVDNYNHNNNNHNNNAFDNNNYNTQNLGDYSYKNDGYNNDNNNNDNNNSYGDTDREKYSIEKICNENDYDSVNNNNNNRNYSNSYNNNNYNDGNNNYNSNNYNYNNNNNNNNNINNNNNSNSNSNSNSNSNSNSNSNSNSNNNNYNNYGYNNHKSNNGGNRYSDDDDNVFNNNNNNNNNNNNNYNNYNSNNNYNNDYDYNDGKRANIYSRNNSNNNNNSKSGNNNSNNYNHNNSNNNGGYNNYNNGYNNYNNNNSNNSNHNSSYNNNNNNNYNNNNNNNNNNNNNNNNNNNNNNNNNNNNNNNNNNNNNNNNNNNNNNNNNNNISNNSNNNNFNYNNDNDRNNSNGNYNNNSSNINNNNNNNNNSNSYHNSCISYSNGGSNSKNSNKNNYNNQQSNANGNHVGNSKNNESCNNTNTNIEKSNKSMWDDENDYYKVQVGEYLNNRYKVLCTVGSGTFSTVVECWDTNSSGQVAIKIVRSAKKYTEDALVEIDILRNLEKTGNSNGKYLSHCIRLLDSFLFKDHICLVFKRYGLSLYEFLKKNRYRPLPLSQIQNISKQLLTAIYSMHKLSLVHTDLKPENILLESSRFTYFDNSIPLQFKNSIDTTSNNSVDHYCHLVDTDIVVIDFGGATFENTHHTAIVCSRPYRPPEIILGMGWSYPCDIWGVGCILVELYLGYTLFDTHNNVQHLAMMEKVMGPFPNSMSNVSKKYFNDYGTLNRPQNSDEIKSMERVEGLKQLKEYFHPCHDSFFDLASRLLEYQPSKRISASDALSHPFLFETIENDCFGPI.

The span at 1-10 (MDRFQTKRKT) shows a compositional bias: basic residues. Disordered regions lie at residues 1–21 (MDRF…NNDY), 39–198 (YKNN…YGDT), and 212–562 (NDYD…TNTN). Low complexity-rich tracts occupy residues 11–21 (YSYNGYSNNDY) and 39–123 (YKNN…ENNY). The segment covering 124–143 (FQSENQSNKDQNSYFNSSYL) has biased composition (polar residues). 4 stretches are compositionally biased toward low complexity: residues 148-196 (DNYN…NSYG), 218-305 (NNNN…NGGN), 314-342 (VFNN…NNDY), and 351-562 (NIYS…TNTN). Residues 590–920 (YKVLCTVGSG…ASDALSHPFL (331 aa)) enclose the Protein kinase domain. ATP contacts are provided by residues 596–604 (VGSGTFSTV) and lysine 619. Aspartate 719 acts as the Proton acceptor in catalysis.

Belongs to the protein kinase superfamily. CMGC Ser/Thr protein kinase family.

It catalyses the reaction L-seryl-[protein] + ATP = O-phospho-L-seryl-[protein] + ADP + H(+). The enzyme catalyses L-threonyl-[protein] + ATP = O-phospho-L-threonyl-[protein] + ADP + H(+). This is Probable serine/threonine-protein kinase clkA (clkA) from Dictyostelium discoideum (Social amoeba).